Consider the following 208-residue polypeptide: HTLV-1 basic zipper factor (208 aa).

Residues 59–93 (RLRWGPVGEEAPPRGETHRDRQRRAEEKRKRKRER) are disordered. A compositionally biased stretch (basic and acidic residues) spans 69-86 (APPRGETHRDRQRRAEEK). 3 consecutive short sequence motifs (nuclear localization signal) follow at residues 86-91 (KRKRKR), 115-119 (RRRRA), and 136-140 (RRERK). The span at 125 to 143 (DRARRKLEEEERRERKWRQ) shows a compositional bias: basic and acidic residues. Residues 125-160 (DRARRKLEEEERRERKWRQTEQGAKQRSARKEKMTE) are disordered.

This sequence belongs to the HTLV-1 HBZ protein family. In terms of assembly, interacts with host ATF4; this interaction inhibits viral RNA transcriptional activation by preventing ATF4 binding to Tax-responsive elements. Interacts with host CREB1; this interaction inhibits host CREB1 transcriptional activity. Interacts with host JUN, JUNB and JUND. Interacts with host EP300.

The protein localises to the host nucleus. In terms of biological role, contributes to the regulation of viral RNA transcription by interacting with host proteins involved in transcriptional activation such as ATF4, or CREB1, and by inhibiting their activity. Additionally, HBZ suppresses host NF-kappa-B-driven transcription mediated by host RELA as well as transcription of some classical NF-kappa-B target genes, including IL8, IL2RA, IRF4, VCAM1, and VEGFA. The sequence is that of HTLV-1 basic zipper factor (HBZ) from Human T-cell leukemia virus 1 (isolate Melanesia mel5 subtype C) (HTLV-1).